Reading from the N-terminus, the 142-residue chain is Large ribosomal subunit protein uL13 (142 aa).

This sequence belongs to the universal ribosomal protein uL13 family. As to quaternary structure, part of the 50S ribosomal subunit.

In terms of biological role, this protein is one of the early assembly proteins of the 50S ribosomal subunit, although it is not seen to bind rRNA by itself. It is important during the early stages of 50S assembly. This chain is Large ribosomal subunit protein uL13, found in Marinomonas sp. (strain MWYL1).